The following is a 247-amino-acid chain: MSSESEKDKERLIQAAKLFFFHIRDLVSFINRFVELFNLTMKTQILPMNLNEESCIKDFFEQMIRNFKEMQLMVDGKHKQMQKEPLCSKVLTAMTSAVEKCATIAPHHTAEDMLRNIQTSGAALVLKTSHVLVNLETSLSLLMQFPIMGLRLSDLYREETKEQSDATSDATTSEKNKSPECPKATTEETLRKLQDVLSPENAHTPVEAAADELEQFVKSMEITLQVLQKSIKTMEGDIFVLTQVQGK.

The segment at 161–187 is disordered; the sequence is KEQSDATSDATTSEKNKSPECPKATTE. Residues 172-187 show a composition bias toward basic and acidic residues; sequence TSEKNKSPECPKATTE.

This is an uncharacterized protein from Mus musculus (Mouse).